A 366-amino-acid chain; its full sequence is Inositol 2-dehydrogenase (366 aa).

It belongs to the Gfo/Idh/MocA family. As to quaternary structure, homotetramer.

The enzyme catalyses myo-inositol + NAD(+) = scyllo-inosose + NADH + H(+). Its function is as follows. Involved in the oxidation of myo-inositol (MI) to 2-keto-myo-inositol (2KMI or 2-inosose). This is Inositol 2-dehydrogenase from Rhodococcus jostii (strain RHA1).